The sequence spans 666 residues: Endogenous retrovirus group K member 9 Gag polyprotein (666 aa).

The N-myristoyl glycine moiety is linked to residue Gly-2. Residues 165-264 (GKGPELVGPS…APPSRQGSEL (100 aa)) are disordered. The segment covering 232-247 (GMPPAPQGRAPYPQPP) has biased composition (pro residues). CCHC-type zinc fingers lie at residues 544-561 (GKCYNCGQIGHLKKNCPV) and 580-597 (DLCPRCKKGKHWASQCRS). Residues 598-641 (KFDKNGQPLSGNEQRGQPQAPQQTGAFPIQPFVPQGFQGQQPPL) form a disordered region. Over residues 604-622 (QPLSGNEQRGQPQAPQQTG) the composition is skewed to polar residues. Over residues 624–640 (FPIQPFVPQGFQGQQPP) the composition is skewed to low complexity.

This sequence belongs to the beta type-B retroviral Gag protein family. HERV class-II K(HML-2) gag subfamily. Myristoylation is essential for retroviral assembly. Alteration of the glycine residue leads to a block in the budding of particles and an accumulation of Gag inside the cell. Post-translationally, specific enzymatic cleavages may yield mature proteins.

It localises to the cell membrane. Functionally, the products of the Gag polyproteins of infectious retroviruses perform highly complex orchestrated tasks during the assembly, budding, maturation, and infection stages of the viral replication cycle. During viral assembly, the proteins form membrane associations and self-associations that ultimately result in budding of an immature virion from the infected cell. Gag precursors also function during viral assembly to selectively bind and package two plus strands of genomic RNA. Endogenous Gag proteins may have kept, lost or modified their original function during evolution. The chain is Endogenous retrovirus group K member 9 Gag polyprotein (ERVK-9) from Homo sapiens (Human).